The following is an 824-amino-acid chain: Leucine--tRNA ligase (824 aa).

A 'HIGH' region motif is present at residues 40 to 50; it reads PYPSGKIHMGH. The 'KMSKS' region signature appears at 580–584; it reads KMSKS. An ATP-binding site is contributed by Lys-583.

It belongs to the class-I aminoacyl-tRNA synthetase family.

It localises to the cytoplasm. It carries out the reaction tRNA(Leu) + L-leucine + ATP = L-leucyl-tRNA(Leu) + AMP + diphosphate. This chain is Leucine--tRNA ligase, found in Alkaliphilus metalliredigens (strain QYMF).